Consider the following 598-residue polypeptide: MAESMQGLHRSHRCTEVSNANIGEKVTVMGWVQKRRNLGSLIFVDLRDRSGILQIVFGEENVGAEGFEKAGTLRSEFVIAVEGTVQKRTAAVNESLKTGDIEVIATSIRVLSEAQTPPFHIEENSKTSEDIRLKYRYLDLRRPDIQRNLMLRSNVLRVMRDFMANEGFLEIETPILCKSTPEGARDYLVPSRIHHGHFYALPQSPQLFKQLLMASGYDRYFQIARCFRDEDLRADRQPEFTQADMELSFVDIDDVIEVNERLLKHLFKEVINVDVEIPFKRMPWQEAMDRFGSDKPDTRFGMELCDVSEVVKDCGFGVFTGALENGGSVRGINVEGQAKMPRKKIDKLVEHAKGCGAKGLAYLCINEDGTYKSSFAKFMTEAELDALVAKMNGKPGDLLLFAADKNKIVWNVLGALRLMLGAELGLIDENKYNFLWVTEFPLLEWSDEENRFMAMHHPFTMPMEEDWDKIDSDPGAVRAKAYDIVLNGTELGGGSVRIHQDDIQEKMFEVLGFTKERAHEQFGFLLDAFSYGVPPHAGLAFGVDRICMHMLHTDNIKEVIAFPKVKDASDLMSEAPGTVDPKQLEELGIAVAAEEDEE.

Glu182 contributes to the L-aspartate binding site. Residues 206–209 (QLFK) are aspartate. Arg228 provides a ligand contact to L-aspartate. ATP-binding positions include 228 to 230 (RDE) and Gln237. His456 is a binding site for L-aspartate. Glu490 contributes to the ATP binding site. Arg497 provides a ligand contact to L-aspartate. ATP is bound at residue 542–545 (GVDR).

Belongs to the class-II aminoacyl-tRNA synthetase family. Type 1 subfamily. In terms of assembly, homodimer.

Its subcellular location is the cytoplasm. The enzyme catalyses tRNA(Asp) + L-aspartate + ATP = L-aspartyl-tRNA(Asp) + AMP + diphosphate. In terms of biological role, catalyzes the attachment of L-aspartate to tRNA(Asp) in a two-step reaction: L-aspartate is first activated by ATP to form Asp-AMP and then transferred to the acceptor end of tRNA(Asp). In Agathobacter rectalis (strain ATCC 33656 / DSM 3377 / JCM 17463 / KCTC 5835 / VPI 0990) (Eubacterium rectale), this protein is Aspartate--tRNA ligase.